A 52-amino-acid polypeptide reads, in one-letter code: ATP synthase protein 8 (52 aa).

The chain crosses the membrane as a helical span at residues 10 to 30 (FLMSLMIMMILIFMTINFYFF).

Belongs to the ATPase protein 8 family. As to quaternary structure, F-type ATPases have 2 components, CF(1) - the catalytic core - and CF(0) - the membrane proton channel.

Its subcellular location is the mitochondrion membrane. Its function is as follows. Mitochondrial membrane ATP synthase (F(1)F(0) ATP synthase or Complex V) produces ATP from ADP in the presence of a proton gradient across the membrane which is generated by electron transport complexes of the respiratory chain. F-type ATPases consist of two structural domains, F(1) - containing the extramembraneous catalytic core and F(0) - containing the membrane proton channel, linked together by a central stalk and a peripheral stalk. During catalysis, ATP synthesis in the catalytic domain of F(1) is coupled via a rotary mechanism of the central stalk subunits to proton translocation. Part of the complex F(0) domain. Minor subunit located with subunit a in the membrane. The polypeptide is ATP synthase protein 8 (MT-ATP8) (Rhipicephalus sanguineus (Brown dog tick)).